The sequence spans 510 residues: NAD(P)H-quinone oxidoreductase subunit 2 A, chloroplastic (510 aa).

Transmembrane regions (helical) follow at residues 24–44, 59–79, 99–119, 124–144, 149–169, 183–203, 229–249, 295–315, 323–343, 347–367, 395–415, 418–438, and 484–504; these read LLLF…GLIL, WFYF…LFRW, IFQF…VEYI, MAIT…MFLC, LITI…LSGY, YLLM…WLYG, ISIA…PAPF, WHLL…LIAI, MLAY…IVGD, GYAS…GTFA, ALSS…AGFF, LHLF…IGLL, and MIVC…IIAI.

Belongs to the complex I subunit 2 family. In terms of assembly, NDH is composed of at least 16 different subunits, 5 of which are encoded in the nucleus.

It is found in the plastid. The protein localises to the chloroplast thylakoid membrane. It catalyses the reaction a plastoquinone + NADH + (n+1) H(+)(in) = a plastoquinol + NAD(+) + n H(+)(out). The catalysed reaction is a plastoquinone + NADPH + (n+1) H(+)(in) = a plastoquinol + NADP(+) + n H(+)(out). Functionally, NDH shuttles electrons from NAD(P)H:plastoquinone, via FMN and iron-sulfur (Fe-S) centers, to quinones in the photosynthetic chain and possibly in a chloroplast respiratory chain. The immediate electron acceptor for the enzyme in this species is believed to be plastoquinone. Couples the redox reaction to proton translocation, and thus conserves the redox energy in a proton gradient. The polypeptide is NAD(P)H-quinone oxidoreductase subunit 2 A, chloroplastic (Amborella trichopoda).